Consider the following 609-residue polypeptide: UvrABC system protein C (609 aa).

Residues 16-94 enclose the GIY-YIG domain; it reads HLPGVYRHLD…IKSLRPRYNI (79 aa). In terms of domain architecture, UVR spans 203–238; that stretch reads REVMDEIEARMLQASTELRFEEAAVLRDQMGSLSKV.

Belongs to the UvrC family. In terms of assembly, interacts with UvrB in an incision complex.

The protein resides in the cytoplasm. In terms of biological role, the UvrABC repair system catalyzes the recognition and processing of DNA lesions. UvrC both incises the 5' and 3' sides of the lesion. The N-terminal half is responsible for the 3' incision and the C-terminal half is responsible for the 5' incision. The protein is UvrABC system protein C of Bordetella pertussis (strain Tohama I / ATCC BAA-589 / NCTC 13251).